The chain runs to 612 residues: Peroxisomal carnitine O-octanoyltransferase (612 aa).

Met1 carries the N-acetylmethionine modification. Lys40 and Lys57 each carry N6-succinyllysine. The active-site Proton acceptor is the His327. CoA-binding positions include Lys406 and 410–417; that span reads KEEALHPD. Residue Lys406 is modified to N6-acetyllysine; alternate. Residue Lys406 is modified to N6-succinyllysine; alternate. Residues Tyr439, Thr441, and Thr452 each contribute to the (R)-carnitine site. A Microbody targeting signal motif is present at residues 610 to 612; the sequence is AHL.

This sequence belongs to the carnitine/choline acetyltransferase family.

It is found in the peroxisome. The catalysed reaction is octanoyl-CoA + (R)-carnitine = O-octanoyl-(R)-carnitine + CoA. It carries out the reaction 4,8-dimethylnonanoyl-CoA + (R)-carnitine = O-4,8-dimethylnonanoyl-(R)-carnitine + CoA. It participates in lipid metabolism; fatty acid beta-oxidation. Functionally, beta-oxidation of fatty acids. The highest activity concerns the C6 to C10 chain length substrate. In Mus musculus (Mouse), this protein is Peroxisomal carnitine O-octanoyltransferase (Crot).